The sequence spans 306 residues: Tryptophan 2,3-dioxygenase (306 aa).

Substrate-binding positions include 75–79, Y137, and R141; that span reads FIIQH. H264 contributes to the heme binding site. T278 provides a ligand contact to substrate.

Belongs to the tryptophan 2,3-dioxygenase family. In terms of assembly, homotetramer. The cofactor is heme.

The catalysed reaction is L-tryptophan + O2 = N-formyl-L-kynurenine. It functions in the pathway amino-acid degradation; L-tryptophan degradation via kynurenine pathway; L-kynurenine from L-tryptophan: step 1/2. Its function is as follows. Heme-dependent dioxygenase that catalyzes the oxidative cleavage of the L-tryptophan (L-Trp) pyrrole ring and converts L-tryptophan to N-formyl-L-kynurenine. Catalyzes the oxidative cleavage of the indole moiety. In Paraburkholderia phytofirmans (strain DSM 17436 / LMG 22146 / PsJN) (Burkholderia phytofirmans), this protein is Tryptophan 2,3-dioxygenase.